Reading from the N-terminus, the 477-residue chain is PEP-dependent dihydroxyacetone kinase, phosphoryl donor subunit DhaM (477 aa).

Residues 1–135 (MIGLIIVSHS…QALQAKQQQL (135 aa)) form the PTS EIIA type-4 domain. His9 serves as the catalytic Tele-phosphohistidine intermediate. Positions 156-243 (ALTTQWVVKN…QLAQHNFGDN (88 aa)) constitute an HPr domain. The Pros-phosphohistidine intermediate role is filled by His170. A PTS EI-like, N-terminal part region spans residues 269 to 477 (HAPNTELCIS…IETRSLIVAS (209 aa)). His435 (tele-phosphohistidine intermediate) is an active-site residue.

This sequence belongs to the PEP-utilizing enzyme family. As to quaternary structure, homodimer. The dihydroxyacetone kinase complex is composed of a homodimer of DhaM, a homodimer of DhaK and the subunit DhaL.

The catalysed reaction is dihydroxyacetone + phosphoenolpyruvate = dihydroxyacetone phosphate + pyruvate. In terms of biological role, component of the dihydroxyacetone kinase complex, which is responsible for the phosphoenolpyruvate (PEP)-dependent phosphorylation of dihydroxyacetone. DhaM serves as the phosphoryl donor. Is phosphorylated by phosphoenolpyruvate in an EI- and HPr-dependent reaction, and a phosphorelay system on histidine residues finally leads to phosphoryl transfer to DhaL and dihydroxyacetone. This is PEP-dependent dihydroxyacetone kinase, phosphoryl donor subunit DhaM from Providencia stuartii (strain MRSN 2154).